Here is a 435-residue protein sequence, read N- to C-terminus: Ribosomal protein uS12 methylthiotransferase RimO (435 aa).

Positions 2–118 (KKFHIVKLGC…IVEKIENGEY (117 aa)) constitute an MTTase N-terminal domain. 6 residues coordinate [4Fe-4S] cluster: Cys11, Cys47, Cys81, Cys150, Cys154, and Cys157. The Radical SAM core domain maps to 136 to 364 (IPDSHYAYVK…MTVQSEISKN (229 aa)). The 69-residue stretch at 367 to 435 (EKYIGETLEV…EYDLEGEIVE (69 aa)) folds into the TRAM domain.

Belongs to the methylthiotransferase family. RimO subfamily. The cofactor is [4Fe-4S] cluster.

Its subcellular location is the cytoplasm. It catalyses the reaction L-aspartate(89)-[ribosomal protein uS12]-hydrogen + (sulfur carrier)-SH + AH2 + 2 S-adenosyl-L-methionine = 3-methylsulfanyl-L-aspartate(89)-[ribosomal protein uS12]-hydrogen + (sulfur carrier)-H + 5'-deoxyadenosine + L-methionine + A + S-adenosyl-L-homocysteine + 2 H(+). Functionally, catalyzes the methylthiolation of an aspartic acid residue of ribosomal protein uS12. This Petrotoga mobilis (strain DSM 10674 / SJ95) protein is Ribosomal protein uS12 methylthiotransferase RimO.